The sequence spans 1017 residues: Probable DNA ligase (1017 aa).

The tract at residues 1–363 is unknown; the sequence is MPWDVKFSHG…PACATPLHAP (363 aa). The tract at residues 326–352 is disordered; it reads GIRSSPPQVRAGDATPSSRSSGDAGVA. The DNA ligase stretch occupies residues 364–1017; that stretch reads DSFARFVAAA…GARPPPAASD (654 aa). ATP is bound at residue E667. Catalysis depends on K669, which acts as the N6-AMP-lysine intermediate. ATP contacts are provided by R674, R689, E717, R860, and K866.

The protein in the C-terminal section; belongs to the ATP-dependent DNA ligase family. The cofactor is Mg(2+).

The catalysed reaction is ATP + (deoxyribonucleotide)n-3'-hydroxyl + 5'-phospho-(deoxyribonucleotide)m = (deoxyribonucleotide)n+m + AMP + diphosphate.. Functionally, DNA ligase that seals nicks in double-stranded DNA during DNA replication, DNA recombination and DNA repair. The sequence is that of Probable DNA ligase (lig) from Opitutus terrae (strain DSM 11246 / JCM 15787 / PB90-1).